Here is a 60-residue protein sequence, read N- to C-terminus: Cytotoxin 5 (60 aa).

Intrachain disulfides connect cysteine 3-cysteine 21, cysteine 14-cysteine 38, cysteine 42-cysteine 53, and cysteine 54-cysteine 59.

This sequence belongs to the three-finger toxin family. Short-chain subfamily. Type IA cytotoxin sub-subfamily. In terms of assembly, monomer in solution; Homodimer and oligomer in the presence of negatively charged lipids forming a pore with a size ranging between 20 and 30 Angstroms. As to expression, expressed by the venom gland.

It is found in the secreted. Its subcellular location is the target cell membrane. Shows cytolytic activity on many different cells by forming pore in lipid membranes. In vivo, increases heart rate or kills the animal by cardiac arrest. In addition, it binds to heparin with high affinity, interacts with Kv channel-interacting protein 1 (KCNIP1) in a calcium-independent manner, and binds to integrin alpha-V/beta-3 (ITGAV/ITGB3) with moderate affinity. The chain is Cytotoxin 5 from Naja mossambica (Mozambique spitting cobra).